The sequence spans 322 residues: uncharacterized protein (322 aa).

Residues 277 to 322 form a disordered region; sequence LVTYGGKDGPSDNEDGPSDDEDGPSDDEEGLSKDGVSEYYQSDLDD. Acidic residues predominate over residues 287–305; sequence SDNEDGPSDDEDGPSDDEE.

This is an uncharacterized protein from Frog virus 3 (isolate Goorha) (FV-3).